The sequence spans 504 residues: Ribonuclease Y (504 aa).

The chain crosses the membrane as a helical span at residues 2–22 (TTSIVIGVVLVTVGLTFGWTI). The KH domain occupies 194-279 (TVSTVNLPSE…EIVQKVTQEV (86 aa)). In terms of domain architecture, HD spans 320 to 413 (VLYHSKEVAL…VQVADAISAA (94 aa)).

The protein belongs to the RNase Y family.

It localises to the cell membrane. Functionally, endoribonuclease that initiates mRNA decay. This Treponema pallidum (strain Nichols) protein is Ribonuclease Y.